Here is a 420-residue protein sequence, read N- to C-terminus: 3-phosphoshikimate 1-carboxyvinyltransferase (420 aa).

The segment at 1-24 is disordered; it reads MTRTAKLTIIPPGRPLSGRAMPPG. Positions 26, 27, and 31 each coordinate 3-phosphoshikimate. Lysine 26 serves as a coordination point for phosphoenolpyruvate. The phosphoenolpyruvate site is built by glycine 97 and arginine 125. Residues serine 170, serine 171, glutamine 172, aspartate 297, asparagine 320, and lysine 324 each coordinate 3-phosphoshikimate. Glutamine 172 provides a ligand contact to phosphoenolpyruvate. The active-site Proton acceptor is aspartate 297. Phosphoenolpyruvate is bound by residues arginine 328, arginine 375, and lysine 400.

The protein belongs to the EPSP synthase family. In terms of assembly, monomer.

The protein localises to the cytoplasm. It catalyses the reaction 3-phosphoshikimate + phosphoenolpyruvate = 5-O-(1-carboxyvinyl)-3-phosphoshikimate + phosphate. The protein operates within metabolic intermediate biosynthesis; chorismate biosynthesis; chorismate from D-erythrose 4-phosphate and phosphoenolpyruvate: step 6/7. Catalyzes the transfer of the enolpyruvyl moiety of phosphoenolpyruvate (PEP) to the 5-hydroxyl of shikimate-3-phosphate (S3P) to produce enolpyruvyl shikimate-3-phosphate and inorganic phosphate. The polypeptide is 3-phosphoshikimate 1-carboxyvinyltransferase (Rhizobium etli (strain CIAT 652)).